Reading from the N-terminus, the 287-residue chain is Syntaxin-11 (287 aa).

Residues 41-71 (LESLYRDIRDIQDENQLLVADVKRLGKQNAR) adopt a coiled-coil conformation. Residues 204 to 266 (LNEIESRHRE…GQAKAQVRKA (63 aa)) form the t-SNARE coiled-coil homology domain.

This sequence belongs to the syntaxin family. As to quaternary structure, interacts with the SNARE proteins SNAP-23 and VAMP.

The protein resides in the membrane. It is found in the golgi apparatus. The protein localises to the trans-Golgi network membrane. SNARE that acts to regulate protein transport between late endosomes and the trans-Golgi network. The protein is Syntaxin-11 (STX11) of Homo sapiens (Human).